The chain runs to 123 residues: Large ribosomal subunit protein bL12 (123 aa).

Belongs to the bacterial ribosomal protein bL12 family. Homodimer. Part of the ribosomal stalk of the 50S ribosomal subunit. Forms a multimeric L10(L12)X complex, where L10 forms an elongated spine to which 2 to 4 L12 dimers bind in a sequential fashion. Binds GTP-bound translation factors.

Its function is as follows. Forms part of the ribosomal stalk which helps the ribosome interact with GTP-bound translation factors. Is thus essential for accurate translation. The protein is Large ribosomal subunit protein bL12 of Salmonella arizonae (strain ATCC BAA-731 / CDC346-86 / RSK2980).